We begin with the raw amino-acid sequence, 1683 residues long: ABC transporter 7 (1683 aa).

Residues 24–44 (DYLRILLPAVVIGLSVLNLGF) form a helical membrane-spanning segment. The tract at residues 53-93 (RSKSPSTHAYAPVSNGDNSRPGAHRTDISPDDDAIAQDDED) is disordered. A compositionally biased stretch (acidic residues) spans 81–93 (SPDDDAIAQDDED). The next 4 helical transmembrane spans lie at 127 to 147 (LSVV…VIAL), 157 to 177 (TLTG…LATL), 190 to 210 (HLWN…IGIF), and 221 to 241 (LAQI…FMAI). A glycan (N-linked (GlcNAc...) asparagine) is linked at asparagine 247. The next 2 membrane-spanning stretches (helical) occupy residues 336–356 (GWAV…KAIL) and 368–388 (SVVW…SLGD). Residues 338–664 (AVMSGMFTFA…LGDMLAHVQE (327 aa)) form the ABC transmembrane type-1 1 domain. The interval 451–473 (GDNDESEDGKDGDKDKEDSSDEQ) is disordered. A glycan (N-linked (GlcNAc...) asparagine) is linked at asparagine 489. The next 2 membrane-spanning stretches (helical) occupy residues 496–516 (YLHF…VLLY) and 518–538 (VLGM…PVNI). An N-linked (GlcNAc...) asparagine glycan is attached at asparagine 545. 2 helical membrane passes run 602 to 622 (VWAC…FFSF) and 632 to 648 (PLHP…FMLL). Positions 700-949 (IALKDAAFIW…GALGEEIAQK (250 aa)) constitute an ABC transporter 1 domain. Position 742-749 (742-749 (GPTGSGKT)) interacts with ATP. The disordered stretch occupies residues 952–998 (SETPNISRIPSRVPSSVGEGSGNTLLDTDGDDHLSKPKNAKKAKKAE). An N-linked (GlcNAc...) asparagine glycan is attached at asparagine 956. The chain crosses the membrane as a helical span at residues 1016-1036 (LYLASMGSWWFWVVAGCIFIS). The ABC transmembrane type-1 2 domain occupies 1028–1351 (VVAGCIFISQ…NILWLVRLYS (324 aa)). N-linked (GlcNAc...) asparagine glycosylation is present at asparagine 1097. Transmembrane regions (helical) follow at residues 1111–1131 (AQYY…TAFL), 1182–1202 (VDQE…GITV), and 1204–1224 (VVLI…ITIA). The N-linked (GlcNAc...) asparagine glycan is linked to asparagine 1277. Transmembrane regions (helical) follow at residues 1304–1324 (LLGD…IGVI) and 1327–1347 (GWAG…LWLV). Residues 1392–1649 (VEFINYTTSY…GEGGSFKSMC (258 aa)) enclose the ABC transporter 2 domain. Asparagine 1396 and asparagine 1411 each carry an N-linked (GlcNAc...) asparagine glycan. ATP is bound at residue 1426 to 1433 (GRTGAGKS). Asparagine 1541 and asparagine 1552 each carry an N-linked (GlcNAc...) asparagine glycan.

It belongs to the ABC transporter superfamily.

The protein resides in the membrane. Its function is as follows. ABC transporter; part of the gene cluster that mediates the biosynthesis of pyriculol and pyriculariol, two heptaketides that induce lesion formation upon application on rice leaves but are dispensable for pathogenicity. With the MFS transporter MFS1, is most likely responsible for pyriculol and pyriculariol secretion and thereby may contribute to intrinsic resistance. The protein is ABC transporter 7 of Pyricularia oryzae (strain 70-15 / ATCC MYA-4617 / FGSC 8958) (Rice blast fungus).